The sequence spans 228 residues: Elongation factor 1-beta (228 aa).

The interval 74–116 (ASKAFTAYGPEGSEASANPKDKPAEEEEEEDLFASDSEDEDPA) is disordered. Residues 84-93 (EGSEASANPK) are igE-binding. Acidic residues predominate over residues 97 to 115 (AEEEEEEDLFASDSEDEDP).

Belongs to the EF-1-beta/EF-1-delta family. EF-1 is composed of 4 subunits: alpha, beta, delta, and gamma.

Functionally, EF-1-beta and EF-1-delta stimulate the exchange of GDP bound to EF-1-alpha to GTP. The chain is Elongation factor 1-beta from Penicillium citrinum.